The following is a 144-amino-acid chain: MAFNFTAFTYIVALIGDAFLIFFAIFHVIAFDELKTDYKNPIDQCNSLNPLVLPEYLLHIFLNLLFLFCGEWFSLCINIPLIAYHIWRYKNRPVMSGPGLYDPTTVLKTDTLYRNMREGWIKLAVYLISFFYYIYGMVYSLIST.

Topologically, residues 1–10 (MAFNFTAFTY) are lumenal. Positions 1–57 (MAFNFTAFTYIVALIGDAFLIFFAIFHVIAFDELKTDYKNPIDQCNSLNPLVLPEYL) are interaction with grk. Residues 11-31 (IVALIGDAFLIFFAIFHVIAF) form a helical membrane-spanning segment. The Cytoplasmic segment spans residues 32 to 56 (DELKTDYKNPIDQCNSLNPLVLPEY). Residues 57-77 (LLHIFLNLLFLFCGEWFSLCI) form a helical membrane-spanning segment. At 78–122 (NIPLIAYHIWRYKNRPVMSGPGLYDPTTVLKTDTLYRNMREGWIK) the chain is on the lumenal side. The helical transmembrane segment at 123–143 (LAVYLISFFYYIYGMVYSLIS) threads the bilayer. Position 144 (threonine 144) is a topological domain, cytoplasmic.

This sequence belongs to the cornichon family. Interacts with grk. Expressed in male and female somatic tissues.

It is found in the endoplasmic reticulum membrane. Functionally, acts as a cargo receptor necessary for the transportation of gurken (grk) to a transitional endoplasmic reticulum (tER) site and promotes its incorporation into coat protein complex II (COPII) vesicles. Associated with gurken, produces a signal received by torpedo resulting in a signaling pathway that first establishes posterior follicle cell fates and normal localization of the anterior and posterior determinants, later they act in a signaling event inducing dorsal follicle cell fates and regulating the dorsal-ventral pattern of egg and embryo. This Drosophila melanogaster (Fruit fly) protein is Protein cornichon (cni).